The primary structure comprises 479 residues: B-cell CLL/lymphoma 6 member B protein (479 aa).

Positions 38–105 constitute a BTB domain; the sequence is TDVTLLVGGQ…MYTSRLRLSP (68 aa). 2 disordered regions span residues 143 to 190 and 210 to 259; these read RPLE…PDPK and GSLV…LSPT. The span at 147–160 shows a compositional bias: pro residues; the sequence is AEPPTPPTAPPPGS. The segment covering 162-172 has biased composition (basic and acidic residues); sequence RRSEGHPDPPT. Residues 234-244 show a composition bias toward low complexity; the sequence is SSSSSSSSSSS. 5 C2H2-type zinc fingers span residues 328 to 350, 356 to 378, 384 to 406, 412 to 434, and 440 to 463; these read YKCQ…RTVH, YHCS…SRIH, YKCE…VLIH, YPCP…VRIH, and YHCD…RQKH.

Associates with BCL6 through the BTB domain. Ubiquitously expressed with higher expression found in heart and placenta.

It localises to the nucleus. Functionally, acts as a sequence-specific transcriptional repressor in association with BCL6. May function in a narrow stage or be related to some events in the early B-cell development. The chain is B-cell CLL/lymphoma 6 member B protein (BCL6B) from Homo sapiens (Human).